The primary structure comprises 243 residues: Nuclear protein UL4 homolog (243 aa).

Residues 193-226 (RPDDQTTPTPTPHQYTSQRRQPETNCPSPQPAFF) are disordered. A compositionally biased stretch (polar residues) spans 205-219 (HQYTSQRRQPETNCP).

The protein belongs to the alphaherpesvirinae HHV-1 UL4 family.

Its subcellular location is the host nucleus. The chain is Nuclear protein UL4 homolog from Varicella-zoster virus (strain Oka vaccine) (HHV-3).